An 866-amino-acid polypeptide reads, in one-letter code: DNA replication licensing factor MCM4 (866 aa).

3 disordered regions span residues 1–67 (MSSP…TSPA), 81–107 (SPLN…TPLR), and 124–145 (GGGS…PVSE). 2 stretches are compositionally biased toward polar residues: residues 47 to 63 (DNIS…SLPA) and 81 to 93 (SPLN…SMGS). Residues S55 and S81 each carry the phosphoserine modification. A Phosphothreonine modification is found at T87. One can recognise an MCM domain in the interval 460 to 669 (IYDRLARAIA…FDKRLASHLV (210 aa)). 512–519 (GDPGTSKS) provides a ligand contact to ATP. The Arginine finger motif lies at 644–647 (SRFD).

It belongs to the MCM family. As to quaternary structure, component of the Mcm2-7 complex. The complex forms a toroidal hexameric ring with the proposed subunit order Mcm2-Mcm6-Mcm4-Mcm7-Mcm3-Mcm5. Post-translationally, phosphorylated by the catalytic component of the Dbf4-dependent kinase (DDK) complex Cdc7.

The protein localises to the nucleus. The enzyme catalyses ATP + H2O = ADP + phosphate + H(+). Functionally, acts as a component of the Mcm2-7 complex (Mcm complex) which is the putative replicative helicase essential for 'once per cell cycle' DNA replication initiation and elongation in eukaryotic cells. The active ATPase sites in the Mcm2-7 ring are formed through the interaction surfaces of two neighboring subunits such that a critical structure of a conserved arginine finger motif is provided in trans relative to the ATP-binding site of the Walker A box of the adjacent subunit. The six ATPase active sites, however, are likely to contribute differentially to the complex helicase activity. Required for DNA replication and cell proliferation. Essential role in mitotic DNA replication but not in endoreplication. The chain is DNA replication licensing factor MCM4 (dpa) from Drosophila melanogaster (Fruit fly).